We begin with the raw amino-acid sequence, 155 residues long: Ribosomal RNA large subunit methyltransferase H (155 aa).

Residues leucine 72, glycine 103, and 122-127 (LSALTL) contribute to the S-adenosyl-L-methionine site.

This sequence belongs to the RNA methyltransferase RlmH family. Homodimer.

The protein localises to the cytoplasm. It carries out the reaction pseudouridine(1915) in 23S rRNA + S-adenosyl-L-methionine = N(3)-methylpseudouridine(1915) in 23S rRNA + S-adenosyl-L-homocysteine + H(+). In terms of biological role, specifically methylates the pseudouridine at position 1915 (m3Psi1915) in 23S rRNA. This Shigella boydii serotype 18 (strain CDC 3083-94 / BS512) protein is Ribosomal RNA large subunit methyltransferase H.